Here is a 113-residue protein sequence, read N- to C-terminus: Large ribosomal subunit protein uL22 (113 aa).

The protein belongs to the universal ribosomal protein uL22 family. As to quaternary structure, part of the 50S ribosomal subunit.

In terms of biological role, this protein binds specifically to 23S rRNA; its binding is stimulated by other ribosomal proteins, e.g. L4, L17, and L20. It is important during the early stages of 50S assembly. It makes multiple contacts with different domains of the 23S rRNA in the assembled 50S subunit and ribosome. The globular domain of the protein is located near the polypeptide exit tunnel on the outside of the subunit, while an extended beta-hairpin is found that lines the wall of the exit tunnel in the center of the 70S ribosome. The chain is Large ribosomal subunit protein uL22 from Stenotrophomonas maltophilia (strain K279a).